The sequence spans 124 residues: Glycine cleavage system H protein (124 aa).

The region spanning 22-104 (TATVGITDFA…YGDGWMIEIE (83 aa)) is the Lipoyl-binding domain. Lys63 carries the post-translational modification N6-lipoyllysine.

It belongs to the GcvH family. The glycine cleavage system is composed of four proteins: P, T, L and H. The cofactor is (R)-lipoate.

Its function is as follows. The glycine cleavage system catalyzes the degradation of glycine. The H protein shuttles the methylamine group of glycine from the P protein to the T protein. The sequence is that of Glycine cleavage system H protein from Salinibacter ruber (strain DSM 13855 / M31).